Reading from the N-terminus, the 312-residue chain is Ribosomal RNA small subunit methyltransferase H (312 aa).

S-adenosyl-L-methionine contacts are provided by residues 34 to 36, D54, F81, D102, and Q109; that span reads AGH.

Belongs to the methyltransferase superfamily. RsmH family.

The protein localises to the cytoplasm. It carries out the reaction cytidine(1402) in 16S rRNA + S-adenosyl-L-methionine = N(4)-methylcytidine(1402) in 16S rRNA + S-adenosyl-L-homocysteine + H(+). Specifically methylates the N4 position of cytidine in position 1402 (C1402) of 16S rRNA. The polypeptide is Ribosomal RNA small subunit methyltransferase H (Geotalea daltonii (strain DSM 22248 / JCM 15807 / FRC-32) (Geobacter daltonii)).